Reading from the N-terminus, the 331-residue chain is Cilia- and flagella-associated protein 119 (331 aa).

At S34 the chain carries Phosphoserine. Disordered regions lie at residues 236–271 (LWPE…PEPE) and 309–331 (SSKL…SKTK). Residues 286–317 (VNKELEQLQGLVEERLKASEERLSSKLTALER) adopt a coiled-coil conformation.

The protein localises to the cell projection. It localises to the cilium. The protein resides in the flagellum. It is found in the cytoplasmic vesicle. Its subcellular location is the secretory vesicle. The protein localises to the acrosome. It localises to the cytoplasm. This is Cilia- and flagella-associated protein 119 from Homo sapiens (Human).